The primary structure comprises 328 residues: GMP reductase (328 aa).

Cys-176 serves as the catalytic Thioimidate intermediate. NADP(+) is bound at residue 205 to 228 (IIADGGIRTHGDIAKSIRFGASMI).

Belongs to the IMPDH/GMPR family. GuaC type 2 subfamily.

The catalysed reaction is IMP + NH4(+) + NADP(+) = GMP + NADPH + 2 H(+). Its function is as follows. Catalyzes the irreversible NADPH-dependent deamination of GMP to IMP. It functions in the conversion of nucleobase, nucleoside and nucleotide derivatives of G to A nucleotides, and in maintaining the intracellular balance of A and G nucleotides. This is GMP reductase from Streptococcus pneumoniae (strain P1031).